The following is a 319-amino-acid chain: Ribonuclease Z (319 aa).

Zn(2+) is bound by residues His62, His64, Asp66, His67, His139, Asp210, and His268. Asp66 acts as the Proton acceptor in catalysis.

This sequence belongs to the RNase Z family. Homodimer. Zn(2+) serves as cofactor.

It carries out the reaction Endonucleolytic cleavage of RNA, removing extra 3' nucleotides from tRNA precursor, generating 3' termini of tRNAs. A 3'-hydroxy group is left at the tRNA terminus and a 5'-phosphoryl group is left at the trailer molecule.. In terms of biological role, zinc phosphodiesterase, which displays some tRNA 3'-processing endonuclease activity. Probably involved in tRNA maturation, by removing a 3'-trailer from precursor tRNA. The sequence is that of Ribonuclease Z from Nostoc punctiforme (strain ATCC 29133 / PCC 73102).